Here is a 246-residue protein sequence, read N- to C-terminus: uncharacterized protein (246 aa).

This is an uncharacterized protein from Acidianus sp. F28 (AFV-2).